A 37-amino-acid chain; its full sequence is Large ribosomal subunit protein bL36c (37 aa).

The protein belongs to the bacterial ribosomal protein bL36 family.

It is found in the plastid. The protein resides in the chloroplast. This chain is Large ribosomal subunit protein bL36c, found in Piper cenocladum (Ant piper).